A 185-amino-acid polypeptide reads, in one-letter code: Ribosome-recycling factor (185 aa).

This sequence belongs to the RRF family.

It is found in the cytoplasm. Functionally, responsible for the release of ribosomes from messenger RNA at the termination of protein biosynthesis. May increase the efficiency of translation by recycling ribosomes from one round of translation to another. The chain is Ribosome-recycling factor from Streptomyces avermitilis (strain ATCC 31267 / DSM 46492 / JCM 5070 / NBRC 14893 / NCIMB 12804 / NRRL 8165 / MA-4680).